Consider the following 433-residue polypeptide: Histidinol dehydrogenase (433 aa).

Tyr-133, Gln-194, and Asn-217 together coordinate NAD(+). Substrate contacts are provided by Ser-240, Gln-262, and His-265. Zn(2+) is bound by residues Gln-262 and His-265. Active-site proton acceptor residues include Glu-330 and His-331. Residues His-331, Asp-364, Glu-418, and His-423 each coordinate substrate. Asp-364 lines the Zn(2+) pocket. His-423 contributes to the Zn(2+) binding site.

This sequence belongs to the histidinol dehydrogenase family. It depends on Zn(2+) as a cofactor.

The catalysed reaction is L-histidinol + 2 NAD(+) + H2O = L-histidine + 2 NADH + 3 H(+). Its pathway is amino-acid biosynthesis; L-histidine biosynthesis; L-histidine from 5-phospho-alpha-D-ribose 1-diphosphate: step 9/9. In terms of biological role, catalyzes the sequential NAD-dependent oxidations of L-histidinol to L-histidinaldehyde and then to L-histidine. This Hydrogenovibrio crunogenus (strain DSM 25203 / XCL-2) (Thiomicrospira crunogena) protein is Histidinol dehydrogenase.